The chain runs to 167 residues: Envelope glycoprotein L (167 aa).

Residues 1–20 (MGIFALFAVLWTTLLVTSHA) form the signal peptide. Positions 18–131 (SHAYVALPCC…ADSSIHNVNI (114 aa)) are interaction with gH. A compositionally biased stretch (polar residues) spans 142–154 (RTGSVSGSQTRAK). A disordered region spans residues 142–167 (RTGSVSGSQTRAKSSSRRAHAGQKGK). The span at 155–167 (SSSRRAHAGQKGK) shows a compositional bias: basic residues.

Belongs to the herpesviridae glycoprotein L family. As to quaternary structure, interacts with glycoprotein H (gH); this interaction is necessary for the correct processing and cell surface expression of gH. The heterodimer gH/gL seems to interact with gB trimers during fusion. When in complex with gH, interacts with host EPHA2; this interaction triggers EPHA2 phosphorylation and endocytosis, allowing virus entry.

The protein resides in the virion membrane. It is found in the host cell membrane. The protein localises to the host Golgi apparatus. Its subcellular location is the host trans-Golgi network. In terms of biological role, the heterodimer glycoprotein H-glycoprotein L is required for the fusion of viral and plasma membranes leading to virus entry into the host cell. Acts as a functional inhibitor of gH and maintains gH in an inhibited form. Upon binding to host integrins, gL dissociates from gH leading to activation of the viral fusion glycoproteins gB and gH. Targets heparan sulfate proteoglycans of the syndecan family as well as host EPHA2 to promote viral entry. This Human herpesvirus 8 type P (isolate GK18) (HHV-8) protein is Envelope glycoprotein L.